A 491-amino-acid polypeptide reads, in one-letter code: MAASYEEERDIQKNYWIEHSADLTVEAMMLDSRASDLDKEERPEVLSLLPPYEGKSVLELGAGIGRFTGELAQKAGELIALDFIDNVIKKNESINGHYKNVKFMCADVTSPDLKITDGSLDLIFSNWLLMYLSDKEVELLAERMVGWIKVGGYIFFRESCFHQSGDSKRKSNPTHYREPRFYSKVFQECQTRDAAGNSFELSMIGCKCIGAYVKNKKNQNQICWIWQKVSSENDRGFQRFLDNVQYKSSGILRYERVFGQGFVSTGGLETTKEFVEKMNLKPGQKVLDVGCGIGGGDFYMAEKFDVHVVGIDLSVNMISFALERAIGLSCSVEFEVADCTTKHYPDNSFDVIYSRDTILHIQDKPALFRTFFKWLKPGGKVLISDYCRSPKTPSAEFSEYIKQRGYDLHDVQAYGQMLKDAGFTDVIAEDRTDQFMQVLKRELDRVEKEKEKFISDFSKEDYDDIVGGWKSKLERCASDEQKWGLFIANKN.

Ala2 carries the post-translational modification N-acetylalanine. Gly61, Arg66, Asp82, Asp107, Val108, and Asn126 together coordinate S-adenosyl-L-homocysteine. Phosphocholine contacts are provided by Ser159, Ser164, Gly165, Arg169, and Tyr176. Residues 245-246 (QY) and Tyr254 each bind N-methylethanolamine phosphate. Tyr254 is a phosphocholine binding site. Positions 263, 264, 290, 312, 338, 339, and 355 each coordinate S-adenosyl-L-homocysteine. Phosphocholine is bound by residues Tyr386, Tyr400, Arg404, Tyr406, and Lys472. N-methylethanolamine phosphate-binding positions include Tyr386, Tyr400, 404–406 (RGY), and Lys472.

It belongs to the class I-like SAM-binding methyltransferase superfamily. PEAMT family. Highly expressed in the meristem and elongation zones of the root. Expressed in differentiated root epidermal cells. Highly expressed in leaf vasculature.

It localises to the cytoplasm. It carries out the reaction phosphoethanolamine + S-adenosyl-L-methionine = N-methylethanolamine phosphate + S-adenosyl-L-homocysteine + H(+). It catalyses the reaction N-methylethanolamine phosphate + S-adenosyl-L-methionine = N,N-dimethylethanolamine phosphate + S-adenosyl-L-homocysteine + H(+). The enzyme catalyses N,N-dimethylethanolamine phosphate + S-adenosyl-L-methionine = phosphocholine + S-adenosyl-L-homocysteine + H(+). Its pathway is phospholipid metabolism; phosphatidylcholine biosynthesis; phosphocholine from phosphoethanolamine: step 1/1. Involved in phosphocholine biosynthesis. Catalyzes the N-methylation of phosphoethanolamine, phosphomonomethylethanolamine and phosphodimethylethanolamine, the three methylation steps required to convert phosphoethanolamine to phosphocholine (PC). Required for root system development and epidermal cell integrity through its role in choline and phospholipid metabolism. In association with NMT3, regulates PC homeostasis, phase transition at the shoot apex, coordinated organ development, and fertility. In association with NMT3, involved in phosphatidylcholine biosynthesis and vascular development. In association with NMT2, involved in the production of phosphatidylcholine in roots, essential for root development. In association with NMT2 produce phosphocholine mainly for leaf growth maintenance. Contributes to the regulation of overall root zonation dynamics through reactive oxygen species (ROS) and auxin-regulated cell differentiation. Participates in root development of primary root elongation under salt stress conditions by balancing reactive oxygen species (ROS) production and distribution through abscisic acid (ABA) signaling. This Arabidopsis thaliana (Mouse-ear cress) protein is Phosphoethanolamine N-methyltransferase 1.